An 882-amino-acid polypeptide reads, in one-letter code: MSGLTLGGGGSGGVRPTQPAAFASLQDSADADRRSSTTTSNNPPPLPSDFSQLSDDFSFGSPISPPHSSNAPDSLLHDSLFPEWKVGTPRAGFDGPDEMQRKDPLATQIWKLYSRTKAQLPNQERMENLTWRMMAMSLKRKERERAQQSRSASARNSVSGPSGIAQLTSPPLIASRPTRQNPSLSTDLTSDPMNLERIFIVPFESPSDHPSPQLTKGEATSAAIPIKSRKDQVAESTPVPASFPHPPQDQRKNSEFGYVPRRVRKTSIDDRQFFNLQVPTRKRPAEASPQVPPVSNAMLAQDPDLSGGVPDYALDASSAFALHHNNHSSSHHNHTSPGMPFGLDTYGLGEDPILTSAGPYQTQFTFSPTESPMTSGNPFANLYAHTPVASSLNSTDFFSPPQSGYQSTASTPQPAYDGEHSMFFDMPSVDARTQRRVPNYVSHRTSNLSASLQPRYMFNQNQDQSHHTGNHSSSMHSPGYPIPQPQHVDPTQVLNPNDFSTGASHAAMFSFGADSDNEDDDGNQFSDRAGLTMPGDLDDGADMNGGMQWDAQFPGSFHSLPGFTAQHRKHVTIGPTDMMDTPSEWAQSGSLGRTHGSAASVSEVRNREQDPRRQKIARTTSTPNTAQLLRQSMNANTSHTSPNTPPESGLSSAVPSRPASPGGSKNGEQSSGPTTCTNCFTQTTPLWRRNPEGQPLCNACGLFLKLHGVVRPLSLKTDVIKKRNRSSANSLAVGTSRASKKSARKNSVQQTTVTTPTSSRAQSGATSFGVRRPRAGAVRRAEPLVPIAAAPPKANPTTSSPGQSRGTSSVQMAPKRQRRLEKATDAEAGGDEASKSSTASGGRSKVVALAPAMPPAAANPANHSIAGGQGASQEWEWLTMSL.

Residues 1–13 (MSGLTLGGGGSGG) show a composition bias toward gly residues. Disordered regions lie at residues 1–75 (MSGL…PDSL), 139–191 (KRKE…LTSD), 228–257 (SRKD…SEFG), 325–344 (NNHS…FGLD), 394–422 (STDF…EHSM), 461–545 (NQDQ…DMNG), and 579–675 (MDTP…GPTT). The segment covering 48–59 (SDFSQLSDDFSF) has biased composition (low complexity). Composition is skewed to polar residues over residues 156-169 (NSVS…QLTS) and 177-191 (PTRQ…LTSD). Positions 325 to 334 (NNHSSSHHNH) are enriched in basic residues. Polar residues-rich tracts occupy residues 394-413 (STDF…STPQ) and 492-503 (QVLNPNDFSTGA). The segment covering 604-613 (VRNREQDPRR) has biased composition (basic and acidic residues). A compositionally biased stretch (polar residues) spans 617-642 (ARTTSTPNTAQLLRQSMNANTSHTSP). A GATA-type zinc finger spans residues 676-700 (CTNCFTQTTPLWRRNPEGQPLCNAC). Residues 723-871 (RNRSSANSLA…NHSIAGGQGA (149 aa)) form a disordered region. The span at 745–759 (KNSVQQTTVTTPTSS) shows a compositional bias: low complexity. The span at 795-811 (NPTTSSPGQSRGTSSVQ) shows a compositional bias: polar residues. Residues 848-861 (ALAPAMPPAAANPA) show a composition bias toward low complexity.

Its subcellular location is the nucleus. Major nitrogen regulatory protein. Positively acting regulatory gene of nitrogen metabolite repression. The protein is Nitrogen regulatory protein areA (areA) of Aspergillus niger.